Reading from the N-terminus, the 139-residue chain is Large ribosomal subunit protein bL21 (139 aa).

Belongs to the bacterial ribosomal protein bL21 family. As to quaternary structure, part of the 50S ribosomal subunit. Contacts protein L20.

Functionally, this protein binds to 23S rRNA in the presence of protein L20. The polypeptide is Large ribosomal subunit protein bL21 (Prochlorococcus marinus (strain NATL2A)).